A 1185-amino-acid polypeptide reads, in one-letter code: Ovostatin homolog 1 (1185 aa).

The signal sequence occupies residues 1-21 (MHVHVCVCLCVCIYTSSCVCA). 5 N-linked (GlcNAc...) asparagine glycosylation sites follow: Asn-80, Asn-155, Asn-347, Asn-452, and Asn-725.

The protein belongs to the protease inhibitor I39 (alpha-2-macroglobulin) family. Homotetramer.

It is found in the secreted. Functionally, is able to inhibit all four classes of proteinases by a unique 'trapping' mechanism. This Homo sapiens (Human) protein is Ovostatin homolog 1 (OVOS1).